The chain runs to 506 residues: Histidine ammonia-lyase (506 aa).

The 5-imidazolinone (Ala-Gly) cross-link spans 143–145 (ASG). Ser-144 carries the 2,3-didehydroalanine (Ser) modification.

This sequence belongs to the PAL/histidase family. Post-translationally, contains an active site 4-methylidene-imidazol-5-one (MIO), which is formed autocatalytically by cyclization and dehydration of residues Ala-Ser-Gly.

The protein resides in the cytoplasm. It carries out the reaction L-histidine = trans-urocanate + NH4(+). It functions in the pathway amino-acid degradation; L-histidine degradation into L-glutamate; N-formimidoyl-L-glutamate from L-histidine: step 1/3. This is Histidine ammonia-lyase from Salmonella typhimurium (strain LT2 / SGSC1412 / ATCC 700720).